Reading from the N-terminus, the 228-residue chain is Ribonuclease S-1 (228 aa).

The first 27 residues, 1–27 (MGVTGMTYMFTMVFSLIVLILSSSTVG), serve as a signal peptide directing secretion. Q36 contacts RNA. A disulfide bridge links C42 with C49. H60 lines the RNA pocket. H60 serves as the catalytic Proton donor. Residues C75 and C119 are joined by a disulfide bond. N87 carries an N-linked (GlcNAc...) asparagine glycan. 98 to 99 (NV) serves as a coordination point for RNA. N-linked (GlcNAc...) asparagine glycosylation occurs at N101. Residues F108, 111-112 (KE), and 115-116 (KH) each bind RNA. The active site involves E112. H116 acts as the Proton acceptor in catalysis. N-linked (GlcNAc...) asparagine glycosylation is found at N144, N157, and N175. 2 disulfide bridges follow: C183/C222 and C199/C210.

It belongs to the RNase T2 family. Post-translationally, N-linked core structure at Asn-87 and Asn-101 contains xylose and fucose or consists of disaccharide (GlcNAc-GlcNAc). N-linked core structure at Asn-144 contains xylose.

The enzyme catalyses a ribonucleotidyl-ribonucleotide-RNA + H2O = a 3'-end 3'-phospho-ribonucleotide-RNA + a 5'-end dephospho-ribonucleoside-RNA + H(+). Self-incompatibility (SI) is the inherited ability of a flowering plant to prevent self-fertilization by discriminating between self and non-self pollen during pollination. In many species, self-incompatibility is controlled by the single, multiallelic locus S. This Pyrus pyrifolia (Chinese pear) protein is Ribonuclease S-1.